Consider the following 510-residue polypeptide: Solute carrier family 2, facilitated glucose transporter member 2 (510 aa).

Over 1 to 10 the chain is Cytoplasmic; the sequence is MTEDKVTGTL. A helical transmembrane segment spans residues 11–31; that stretch reads VLAVFTAVLSSFQFGYDIGVI. Topologically, residues 32 to 96 are extracellular; it reads NAPQQVIITH…SASLITMFWS (65 aa). N-linked (GlcNAc...) asparagine glycosylation is present at asparagine 62. The helical transmembrane segment at 97-117 threads the bilayer; that stretch reads LSVSSFAVGGMIASFFGGLLG. Topologically, residues 118 to 122 are cytoplasmic; sequence DKLGR. A helical membrane pass occupies residues 123–143; sequence IKALLVANILSLVGALLMGFS. The Extracellular segment spans residues 144 to 157; that stretch reads KLGPSHILIISGRG. The helical transmembrane segment at 158–178 threads the bilayer; it reads ISGLYCGLISGLIPMYIGEIA. The Cytoplasmic segment spans residues 179-191; sequence PTTLRGAIGALHQ. Glutamine 191 is a D-glucose binding site. A helical membrane pass occupies residues 192–212; sequence LAIVTGILISQIVGLDFILGN. The Extracellular portion of the chain corresponds to 213–215; it reads HEL. A helical transmembrane segment spans residues 216-236; the sequence is WHILLGLSAVPAILQCLLLFF. At 237-301 the chain is on the cytoplasmic side; it reads CPESPRYLYI…LFTNASYRQP (65 aa). Residues 302 to 322 form a helical membrane-spanning segment; that stretch reads ILVALMLHAAQQFSGINGIFY. D-glucose-binding positions include 312-313 and asparagine 318; that span reads QQ. The Extracellular portion of the chain corresponds to 323-336; sequence YSTSIFQTAGISQP. Residues 337–357 traverse the membrane as a helical segment; the sequence is VYATIGVGAVNTVFTAVSVFL. Asparagine 347 serves as a coordination point for D-glucose. Over 358–365 the chain is Cytoplasmic; sequence VEKAGRRS. A helical membrane pass occupies residues 366–386; it reads LFLIGMSGMFVCAIFMSVGLV. Over 387–400 the chain is Extracellular; the sequence is LLSKFPWMNYVSMT. A helical membrane pass occupies residues 401-421; sequence AIFLFVSFFEIGPGPIPWFMV. D-glucose-binding residues include glutamate 410 and tryptophan 418. Residues 422 to 431 lie on the Cytoplasmic side of the membrane; sequence AEFFSQGPRP. A helical membrane pass occupies residues 432–452; it reads AALAIAAFSNWTGNFIIALCF. Residues 453–454 lie on the Extracellular side of the membrane; the sequence is QY. The chain crosses the membrane as a helical span at residues 455–475; sequence IADFCGPYVFFLLLVWSWPLF. Residues 476–510 lie on the Cytoplasmic side of the membrane; sequence CSHFLKFQKPKENPLRKSQQSSERRGVQLKRQKLL. Positions 490–510 are disordered; sequence LRKSQQSSERRGVQLKRQKLL.

Belongs to the major facilitator superfamily. Sugar transporter (TC 2.A.1.1) family. Glucose transporter subfamily. In terms of processing, N-glycosylated; required for stability and retention at the cell surface of pancreatic beta cells.

The protein resides in the cell membrane. It catalyses the reaction D-glucose(out) = D-glucose(in). The enzyme catalyses D-fructose(out) = D-fructose(in). It carries out the reaction L-dehydroascorbate(out) = L-dehydroascorbate(in). The catalysed reaction is D-galactose(in) = D-galactose(out). D-glucose and maltose competitively inhibit fructose transport. D-glucose, D-fructose and maltose inhibit deoxyglucose transport. In terms of biological role, facilitative hexose transporter that mediates the transport of glucose, fructose and galactose. Likely mediates the bidirectional transfer of glucose across the plasma membrane of hepatocytes and is responsible for uptake of glucose by the beta cells; may comprise part of the glucose-sensing mechanism of the beta cell. May also participate with the Na(+)/glucose cotransporter in the transcellular transport of glucose in the small intestine and kidney. Also able to mediate the transport of dehydroascorbate. The protein is Solute carrier family 2, facilitated glucose transporter member 2 of Bos taurus (Bovine).